The chain runs to 189 residues: Small ribosomal subunit protein uS5 (189 aa).

Residues 22–85 enclose the S5 DRBM domain; the sequence is FVDKLVAINR…EAAKRELIFV (64 aa).

Belongs to the universal ribosomal protein uS5 family. Part of the 30S ribosomal subunit. Contacts proteins S4 and S8.

Functionally, with S4 and S12 plays an important role in translational accuracy. In terms of biological role, located at the back of the 30S subunit body where it stabilizes the conformation of the head with respect to the body. In Rhizobium johnstonii (strain DSM 114642 / LMG 32736 / 3841) (Rhizobium leguminosarum bv. viciae), this protein is Small ribosomal subunit protein uS5.